Consider the following 518-residue polypeptide: Xaa-Pro aminopeptidase 3 (518 aa).

The N-terminal 48 residues, 1–48, are a transit peptide targeting the mitochondrion; sequence MNNICKLNKFIISKSSSSLSSTSSKIKTNCLIKNAKMFSSSLNLNRFY. Substrate-binding residues include Tyr-314, Asp-345, Asp-356, His-434, His-441, Glu-461, and Glu-485. Asp-345, Asp-356, and His-434 together coordinate Mn(2+). 2 residues coordinate Mn(2+): Glu-461 and Glu-485.

Belongs to the peptidase M24B family. Homodimer. Mn(2+) is required as a cofactor.

The protein localises to the mitochondrion. Its subcellular location is the cytoplasm. It catalyses the reaction Release of any N-terminal amino acid, including proline, that is linked to proline, even from a dipeptide or tripeptide.. Its function is as follows. Catalyzes the removal of a penultimate prolyl residue from the N-termini of peptides, such as Leu-Pro-Ala. Also shows low activity towards peptides with Ala or Ser at the P1 position. The chain is Xaa-Pro aminopeptidase 3 (xpnpep3) from Dictyostelium discoideum (Social amoeba).